The sequence spans 380 residues: Tryptophan--tRNA ligase (380 aa).

A 'HIGH' region motif is present at residues 81–89; sequence PSLGMHIGH. The short motif at 253-257 is the 'KMSKS' region element; sequence KMSSS.

Belongs to the class-I aminoacyl-tRNA synthetase family.

It is found in the cytoplasm. The catalysed reaction is tRNA(Trp) + L-tryptophan + ATP = L-tryptophyl-tRNA(Trp) + AMP + diphosphate + H(+). This is Tryptophan--tRNA ligase from Saccharolobus solfataricus (strain ATCC 35092 / DSM 1617 / JCM 11322 / P2) (Sulfolobus solfataricus).